The following is a 175-amino-acid chain: Archaemetzincin (175 aa).

Position 125 (His-125) interacts with Zn(2+). The active-site Proton acceptor is the Glu-126. Positions 129, 135, 136, 141, 160, and 163 each coordinate Zn(2+).

This sequence belongs to the peptidase M54 family. As to quaternary structure, monomer. It depends on Zn(2+) as a cofactor.

Probable zinc metalloprotease whose natural substrate is unknown. Does not show endo- or exopeptidase activity against resorufin labeled casein, p-nitroanilide (pNA), amidomethylcoumarin (AMC) (one to three amino acids in length), and hippuryl-aminoacid substrates. This chain is Archaemetzincin, found in Methanopyrus kandleri (strain AV19 / DSM 6324 / JCM 9639 / NBRC 100938).